The sequence spans 320 residues: Eukaryotic translation initiation factor 3 subunit G (320 aa).

Positions 1 to 59 (MPTGDFDSKPSWADQVEEEGEDDKCVTSELLKGIPLATGDTSPEPELLPGAPLPPPKEV) are disordered. A phosphoserine mark is found at Ser-8 and Ser-11. Thr-38 and Thr-41 each carry phosphothreonine. Phosphoserine is present on residues Ser-42, Ser-189, Ser-223, and Ser-264. The segment at 209 to 234 (KTGKYVPPSLRDGASRRGESMQPNRR) is disordered. The segment covering 221–234 (GASRRGESMQPNRR) has biased composition (basic and acidic residues). The RRM domain occupies 239–317 (ATIRVTNLSE…LILNVEWAKP (79 aa)).

As to quaternary structure, component of the eukaryotic translation initiation factor 3 (eIF-3) complex, which is composed of 13 subunits: EIF3A, EIF3B, EIF3C, EIF3D, EIF3E, EIF3F, EIF3G, EIF3H, EIF3I, EIF3J, EIF3K, EIF3L and EIF3M. The eIF-3 complex appears to include 3 stable modules: module A is composed of EIF3A, EIF3B, EIF3G and EIF3I; module B is composed of EIF3F, EIF3H, and EIF3M; and module C is composed of EIF3C, EIF3D, EIF3E, EIF3K and EIF3L. EIF3C of module C binds EIF3B of module A and EIF3H of module B, thereby linking the three modules. EIF3J is a labile subunit that binds to the eIF-3 complex via EIF3B. The eIF-3 complex interacts with RPS6KB1 under conditions of nutrient depletion. Mitogenic stimulation leads to binding and activation of a complex composed of MTOR and RPTOR, leading to phosphorylation and release of RPS6KB1 and binding of EIF4B to eIF-3. Interacts (via C-terminus) with AIFM1 (via N-terminus). Interacts with DHX33; the interaction is independent of RNA. Post-translationally, phosphorylated. Phosphorylation is enhanced upon serum stimulation.

The protein resides in the cytoplasm. It is found in the nucleus. It localises to the perinuclear region. In terms of biological role, RNA-binding component of the eukaryotic translation initiation factor 3 (eIF-3) complex, which is required for several steps in the initiation of protein synthesis. The eIF-3 complex associates with the 40S ribosome and facilitates the recruitment of eIF-1, eIF-1A, eIF-2:GTP:methionyl-tRNAi and eIF-5 to form the 43S pre-initiation complex (43S PIC). The eIF-3 complex stimulates mRNA recruitment to the 43S PIC and scanning of the mRNA for AUG recognition. The eIF-3 complex is also required for disassembly and recycling of post-termination ribosomal complexes and subsequently prevents premature joining of the 40S and 60S ribosomal subunits prior to initiation. The eIF-3 complex specifically targets and initiates translation of a subset of mRNAs involved in cell proliferation, including cell cycling, differentiation and apoptosis, and uses different modes of RNA stem-loop binding to exert either translational activation or repression. This subunit can bind 18S rRNA. Functionally, (Microbial infection) In case of FCV infection, plays a role in the ribosomal termination-reinitiation event leading to the translation of VP2. The protein is Eukaryotic translation initiation factor 3 subunit G of Homo sapiens (Human).